Reading from the N-terminus, the 231-residue chain is Large ribosomal subunit protein uL1 (231 aa).

The protein belongs to the universal ribosomal protein uL1 family. Part of the 50S ribosomal subunit.

Functionally, binds directly to 23S rRNA. The L1 stalk is quite mobile in the ribosome, and is involved in E site tRNA release. Its function is as follows. Protein L1 is also a translational repressor protein, it controls the translation of the L11 operon by binding to its mRNA. The protein is Large ribosomal subunit protein uL1 of Buchnera aphidicola subsp. Acyrthosiphon pisum (strain APS) (Acyrthosiphon pisum symbiotic bacterium).